The chain runs to 242 residues: Uridylate kinase (242 aa).

An ATP-binding site is contributed by Lys15–Gly18. The tract at residues Gly23–Gly28 is involved in allosteric activation by GTP. Gly57 contributes to the UMP binding site. Positions 58 and 62 each coordinate ATP. UMP is bound by residues Asp77 and Thr138 to Thr145. The ATP site is built by Thr165, Tyr171, and Asp174.

It belongs to the UMP kinase family. In terms of assembly, homohexamer.

The protein localises to the cytoplasm. The catalysed reaction is UMP + ATP = UDP + ADP. It participates in pyrimidine metabolism; CTP biosynthesis via de novo pathway; UDP from UMP (UMPK route): step 1/1. With respect to regulation, allosterically activated by GTP. Inhibited by UTP. Catalyzes the reversible phosphorylation of UMP to UDP. The protein is Uridylate kinase of Shewanella sp. (strain ANA-3).